Here is a 243-residue protein sequence, read N- to C-terminus: Pyridoxine 5'-phosphate synthase (243 aa).

3-amino-2-oxopropyl phosphate is bound at residue asparagine 9. 1-deoxy-D-xylulose 5-phosphate is bound at residue 11 to 12 (DH). Arginine 20 is a binding site for 3-amino-2-oxopropyl phosphate. Catalysis depends on histidine 45, which acts as the Proton acceptor. 1-deoxy-D-xylulose 5-phosphate is bound by residues arginine 47 and histidine 52. Glutamate 72 acts as the Proton acceptor in catalysis. Threonine 102 contributes to the 1-deoxy-D-xylulose 5-phosphate binding site. The Proton donor role is filled by histidine 193. Residues glycine 194 and 215–216 (GH) contribute to the 3-amino-2-oxopropyl phosphate site.

Belongs to the PNP synthase family. As to quaternary structure, homooctamer; tetramer of dimers.

The protein localises to the cytoplasm. It carries out the reaction 3-amino-2-oxopropyl phosphate + 1-deoxy-D-xylulose 5-phosphate = pyridoxine 5'-phosphate + phosphate + 2 H2O + H(+). It functions in the pathway cofactor biosynthesis; pyridoxine 5'-phosphate biosynthesis; pyridoxine 5'-phosphate from D-erythrose 4-phosphate: step 5/5. In terms of biological role, catalyzes the complicated ring closure reaction between the two acyclic compounds 1-deoxy-D-xylulose-5-phosphate (DXP) and 3-amino-2-oxopropyl phosphate (1-amino-acetone-3-phosphate or AAP) to form pyridoxine 5'-phosphate (PNP) and inorganic phosphate. The sequence is that of Pyridoxine 5'-phosphate synthase from Vibrio cholerae serotype O1 (strain ATCC 39315 / El Tor Inaba N16961).